The primary structure comprises 107 residues: Ribonuclease P protein component 4 (107 aa).

Residues Cys66, Cys69, Cys92, and Cys95 each coordinate Zn(2+).

This sequence belongs to the eukaryotic/archaeal RNase P protein component 4 family. In terms of assembly, consists of a catalytic RNA component and at least 4-5 protein subunits. The cofactor is Zn(2+).

It is found in the cytoplasm. The enzyme catalyses Endonucleolytic cleavage of RNA, removing 5'-extranucleotides from tRNA precursor.. Part of ribonuclease P, a protein complex that generates mature tRNA molecules by cleaving their 5'-ends. In Methanosarcina barkeri (strain Fusaro / DSM 804), this protein is Ribonuclease P protein component 4.